A 90-amino-acid chain; its full sequence is Probable Fe(2+)-trafficking protein (90 aa).

It belongs to the Fe(2+)-trafficking protein family.

In terms of biological role, could be a mediator in iron transactions between iron acquisition and iron-requiring processes, such as synthesis and/or repair of Fe-S clusters in biosynthetic enzymes. The sequence is that of Probable Fe(2+)-trafficking protein from Ectopseudomonas mendocina (strain ymp) (Pseudomonas mendocina).